We begin with the raw amino-acid sequence, 162 residues long: Ciliary microtubule inner protein 5 (162 aa).

A disordered region spans residues Met1–Gly44.

The protein localises to the cell projection. It localises to the cilium. The polypeptide is Ciliary microtubule inner protein 5 (Homo sapiens (Human)).